The sequence spans 249 residues: uncharacterized protein (249 aa).

The signal sequence occupies residues 1 to 43 (MRRGRSRPAGAAPAALLLPLLLLLPLTGCDRLAAAPAEHAAAA). The segment at 40–59 (AAAAGDPAQDADRGRRLPPV) is disordered. One can recognise a NodB homology domain in the interval 68–243 (PVVFLTYDDG…TIEEQGLRVG (176 aa)).

This is an uncharacterized protein from Streptomyces coelicolor (strain ATCC BAA-471 / A3(2) / M145).